The chain runs to 196 residues: ECF RNA polymerase sigma factor SigM (196 aa).

A sigma-70 factor domain-2 region spans residues 39–105; sequence LFRRHHRQLH…ACLDRLRRAK (67 aa). The Polymerase core binding motif lies at 63–66; it reads DALQ. The segment at 130–181 is sigma-70 factor domain-4; the sequence is AVQRALMRLPVEQRAAVVAVDMQGYSIADTARMLGVAEGTVKSRCARARARL. Residues 156 to 175 constitute a DNA-binding region (H-T-H motif); it reads IADTARMLGVAEGTVKSRCA.

The protein belongs to the sigma-70 factor family. ECF subfamily. In terms of assembly, interacts transiently with the RNA polymerase catalytic core formed by RpoA, RpoB, RpoC and RpoZ (2 alpha, 1 beta, 1 beta' and 1 omega subunit) to form the RNA polymerase holoenzyme that can initiate transcription. Interacts (via sigma-70 factor domain-4) with anti-sigma-M factor RsmA (AC L7N5D7).

Sigma factors are initiation factors that promote the attachment of RNA polymerase to specific initiation sites and are then released. Extracytoplasmic function (ECF) sigma factors are held in an inactive form by an anti-sigma factor (RsaM, AC L7N5D7) until released by regulated intramembrane proteolysis. This sigma factor is required for the synthesis of surface or secreted molecules. This Mycobacterium tuberculosis (strain ATCC 25618 / H37Rv) protein is ECF RNA polymerase sigma factor SigM (sigM).